A 492-amino-acid chain; its full sequence is Ferruginol synthase (492 aa).

The helical transmembrane segment at 1-21 threads the bilayer; it reads METIALLAALFFIALTCFLTS. The Cytoplasmic segment spans residues 22-492; it reads GRRRNLPPGP…VPLKIIPLRP (471 aa). Residue C436 coordinates heme.

This sequence belongs to the cytochrome P450 family. Heme serves as cofactor.

Its subcellular location is the endoplasmic reticulum membrane. The catalysed reaction is abieta-8,11,13-triene + reduced [NADPH--hemoprotein reductase] + O2 = ferruginol + oxidized [NADPH--hemoprotein reductase] + H2O + H(+). Its pathway is secondary metabolite biosynthesis; terpenoid biosynthesis. In terms of biological role, cytochrome P450 enzyme (CYP) which catalyzes a unique two-electron oxidation cascade on abieta-8,11,13-triene to produce ferruginol, an intermediate in tanshinone biosynthesis. The chain is Ferruginol synthase from Isodon rubescens (Rabdosia rubescens).